Consider the following 634-residue polypeptide: Microtubule-associated protein 70-2 (634 aa).

Positions 1 to 57 (MSDVSGDGDLSATVTEHEVTPQPPVSSATYPSLTVSASYKESSGGKSSSKRRPIRPS) are disordered. Polar residues predominate over residues 25 to 35 (VSSATYPSLTV). A compositionally biased stretch (low complexity) spans 36 to 47 (SASYKESSGGKS). The stretch at 74–392 (DPVKVELNRL…LRLKVLEETL (319 aa)) forms a coiled coil. The tract at residues 258 to 494 (ILDRMHRQKV…YSFNKATDDS (237 aa)) is required for targeting to microtubules. Polar residues-rich tracts occupy residues 393 to 417 (RGTSSSATRNTPEARSMSNGPSRRQ) and 443 to 464 (MRHSLSINSTSVLKNAKGTSKS). Disordered stretches follow at residues 393-526 (RGTS…SVPG) and 594-634 (VEKD…KSTQ). The stretch at 532–601 (LQKEVVSLRK…MRVEKDQDAR (70 aa)) forms a coiled coil. The span at 605–616 (FSNSKSPSNTAQ) shows a compositional bias: polar residues.

It belongs to the MAP70 family.

The protein resides in the cytoplasm. The protein localises to the cytoskeleton. Its function is as follows. Plant-specific protein that interact with microtubules. This chain is Microtubule-associated protein 70-2 (MAP70.2), found in Arabidopsis thaliana (Mouse-ear cress).